A 150-amino-acid polypeptide reads, in one-letter code: MSDKFHILLLNGPNLNLLGTREPEKYGYTTLAEIVSQLEIQAQGMDVALSHLQSNAEHALIDSIHQARGNTDFILINPAAFTHTSVALRDALLGVQIPFIEIHLSNVHAREPFRHHSYLSDIAVGVICGLGADGYNFALQAAVNRLSKSN.

The Proton acceptor role is filled by Tyr26. The substrate site is built by Asn77, His83, and Asp90. Residue His103 is the Proton donor of the active site. Substrate is bound by residues 104-105 (LS) and Arg114.

The protein belongs to the type-II 3-dehydroquinase family. As to quaternary structure, homododecamer.

It catalyses the reaction 3-dehydroquinate = 3-dehydroshikimate + H2O. The protein operates within metabolic intermediate biosynthesis; chorismate biosynthesis; chorismate from D-erythrose 4-phosphate and phosphoenolpyruvate: step 3/7. Catalyzes a trans-dehydration via an enolate intermediate. The chain is 3-dehydroquinate dehydratase from Yersinia pseudotuberculosis serotype O:1b (strain IP 31758).